A 443-amino-acid polypeptide reads, in one-letter code: Exodeoxyribonuclease 7 large subunit (443 aa).

It belongs to the XseA family. In terms of assembly, heterooligomer composed of large and small subunits.

The protein localises to the cytoplasm. The catalysed reaction is Exonucleolytic cleavage in either 5'- to 3'- or 3'- to 5'-direction to yield nucleoside 5'-phosphates.. In terms of biological role, bidirectionally degrades single-stranded DNA into large acid-insoluble oligonucleotides, which are then degraded further into small acid-soluble oligonucleotides. This chain is Exodeoxyribonuclease 7 large subunit, found in Vibrio vulnificus (strain CMCP6).